We begin with the raw amino-acid sequence, 336 residues long: Glycerol-3-phosphate dehydrogenase [NAD(P)+] (336 aa).

4 residues coordinate NADPH: Ser-13, Trp-14, Arg-34, and Lys-108. Residues Lys-108, Gly-138, and Ser-140 each coordinate sn-glycerol 3-phosphate. Ala-142 is a binding site for NADPH. Sn-glycerol 3-phosphate contacts are provided by Lys-193, Asp-246, Ser-256, Arg-257, and Asn-258. Lys-193 (proton acceptor) is an active-site residue. Arg-257 provides a ligand contact to NADPH. 2 residues coordinate NADPH: Val-281 and Glu-283.

Belongs to the NAD-dependent glycerol-3-phosphate dehydrogenase family.

Its subcellular location is the cytoplasm. It carries out the reaction sn-glycerol 3-phosphate + NAD(+) = dihydroxyacetone phosphate + NADH + H(+). The catalysed reaction is sn-glycerol 3-phosphate + NADP(+) = dihydroxyacetone phosphate + NADPH + H(+). It functions in the pathway membrane lipid metabolism; glycerophospholipid metabolism. In terms of biological role, catalyzes the reduction of the glycolytic intermediate dihydroxyacetone phosphate (DHAP) to sn-glycerol 3-phosphate (G3P), the key precursor for phospholipid synthesis. In Carboxydothermus hydrogenoformans (strain ATCC BAA-161 / DSM 6008 / Z-2901), this protein is Glycerol-3-phosphate dehydrogenase [NAD(P)+].